The sequence spans 88 residues: FXYD domain-containing ion transport regulator 3 (88 aa).

The N-terminal stretch at 1-20 is a signal peptide; the sequence is MQEFALSLLVLLAGLPTLDA. The Extracellular segment spans residues 21-38; that stretch reads NDPEDKDSPFYYDWHSLR. Residues 39–59 form a helical membrane-spanning segment; it reads VGGLICAGILCALGIIVLMSG. Topologically, residues 60-88 are cytoplasmic; the sequence is KCKCKFSQKPSHRPGDGPPLITPGSAHNC. The disordered stretch occupies residues 66–88; the sequence is SQKPSHRPGDGPPLITPGSAHNC.

The protein belongs to the FXYD family. As to quaternary structure, regulatory subunit of the sodium/potassium-transporting ATPase which is composed of a catalytic alpha subunit, a non-catalytic beta subunit and an additional regulatory subunit. Interacts with catalytic alpha subunit ATP1A1. Also interacts with non-catalytic beta subunit ATP1B1. Interacts with the alpha1-beta1, alpha2-beta1 and alpha3-beta1 NKA isozymes. In terms of processing, glutathionylated.

It localises to the cell membrane. Functionally, associates with and regulates the activity of the sodium/potassium-transporting ATPase (NKA) which transports Na(+) out of the cell and K(+) into the cell. Reduces glutathionylation of the NKA beta-1 subunit ATP1B1, thus reversing glutathionylation-mediated inhibition of ATP1B1. Induces a hyperpolarization-activated chloride current when expressed in Xenopus oocytes. This chain is FXYD domain-containing ion transport regulator 3 (Fxyd3), found in Rattus norvegicus (Rat).